A 379-amino-acid chain; its full sequence is Cyclic di-GMP phosphodiesterase PdeB (379 aa).

The HD-GYP domain occupies 114 to 310 (FYKKQKKIFI…PLDFIVELND (197 aa)).

Requires Mn(2+) as cofactor.

The catalysed reaction is 3',3'-c-di-GMP + 2 H2O = 2 GMP + 2 H(+). Its function is as follows. Phosphodiesterase (PDE) that catalyzes the hydrolysis of cyclic diguanylate (c-di-GMP) to GMP. In Borreliella burgdorferi (strain ATCC 35210 / DSM 4680 / CIP 102532 / B31) (Borrelia burgdorferi), this protein is Cyclic di-GMP phosphodiesterase PdeB.